Here is a 392-residue protein sequence, read N- to C-terminus: S-adenosylmethionine synthase (392 aa).

His-20 is a binding site for ATP. Asp-22 serves as a coordination point for Mg(2+). Position 48 (Glu-48) interacts with K(+). Residues Glu-61 and Gln-106 each contribute to the L-methionine site. Residues 106–116 are flexible loop; sequence QSQDIINAIKK. Residues 171–173, Asp-248, 254–255, Ala-271, and Lys-275 each bind ATP; these read DSK and RK. Position 248 (Asp-248) interacts with L-methionine. Position 279 (Lys-279) interacts with L-methionine.

This sequence belongs to the AdoMet synthase family. Homotetramer; dimer of dimers. Requires Mg(2+) as cofactor. K(+) is required as a cofactor.

It localises to the cytoplasm. The enzyme catalyses L-methionine + ATP + H2O = S-adenosyl-L-methionine + phosphate + diphosphate. It functions in the pathway amino-acid biosynthesis; S-adenosyl-L-methionine biosynthesis; S-adenosyl-L-methionine from L-methionine: step 1/1. Functionally, catalyzes the formation of S-adenosylmethionine (AdoMet) from methionine and ATP. The overall synthetic reaction is composed of two sequential steps, AdoMet formation and the subsequent tripolyphosphate hydrolysis which occurs prior to release of AdoMet from the enzyme. This Borrelia garinii subsp. bavariensis (strain ATCC BAA-2496 / DSM 23469 / PBi) (Borreliella bavariensis) protein is S-adenosylmethionine synthase.